The sequence spans 104 residues: UPF0147 protein MK1586 (104 aa).

It belongs to the UPF0147 family.

In Methanopyrus kandleri (strain AV19 / DSM 6324 / JCM 9639 / NBRC 100938), this protein is UPF0147 protein MK1586.